Reading from the N-terminus, the 362-residue chain is Glutamate 5-kinase (362 aa).

An ATP-binding site is contributed by lysine 3. Serine 43, aspartate 128, and asparagine 140 together coordinate substrate. ATP contacts are provided by residues 160–161 and 202–208; these read TD and TGGMRTK. In terms of domain architecture, PUA spans 267–348; that stretch reads AGAILVDAGA…REIENVLGYS (82 aa).

This sequence belongs to the glutamate 5-kinase family.

It localises to the cytoplasm. It carries out the reaction L-glutamate + ATP = L-glutamyl 5-phosphate + ADP. It functions in the pathway amino-acid biosynthesis; L-proline biosynthesis; L-glutamate 5-semialdehyde from L-glutamate: step 1/2. Catalyzes the transfer of a phosphate group to glutamate to form L-glutamate 5-phosphate. This is Glutamate 5-kinase from Xanthomonas oryzae pv. oryzae (strain KACC10331 / KXO85).